The following is a 33-amino-acid chain: Pardaxin P-3 (33 aa).

The protein belongs to the pardaxin family. As to quaternary structure, in aqueous solution exists as a tetramer.

Its subcellular location is the secreted. The protein resides in the target cell membrane. Its function is as follows. Exhibits unusual shark repellent and surfactant properties. Forms voltage-dependent, ion-permeable channels in membranes. At high concentration causes cell membrane lysis. This chain is Pardaxin P-3, found in Pardachirus pavoninus (Peacock sole).